A 264-amino-acid chain; its full sequence is MSQTKDFVLYGEHFNSRFLLGTALYASPQLMRDSIEKSRCDIVTLGLRRQNPANRDGDTFWQYIQDSGCRLLPNTAGCKSVKEAVTLAEMSREIFDTDWIKLEVVGDDYNLQPDPFGLVEAAGILIKQGFKVLPYCTDDLILCKRLLDVGCQVLMPWGAPIGTGQGLLNRYNLRSLRERIKDVPMIIDAGLGAPSQAAEAMEMGYDGILLNTAVAKAHNPPLMAEAFADAIDAGRKAYNAGLMQKRQTASPSTPTLGQPFWHNQ.

Residue Lys-101 is the Schiff-base intermediate with DXP of the active site. Residues Gly-162, 189-190, and 211-212 each bind 1-deoxy-D-xylulose 5-phosphate; these read AG and NT. Residues 245-264 form a disordered region; sequence KRQTASPSTPTLGQPFWHNQ.

This sequence belongs to the ThiG family. In terms of assembly, homotetramer. Forms heterodimers with either ThiH or ThiS.

The protein localises to the cytoplasm. It catalyses the reaction [ThiS sulfur-carrier protein]-C-terminal-Gly-aminoethanethioate + 2-iminoacetate + 1-deoxy-D-xylulose 5-phosphate = [ThiS sulfur-carrier protein]-C-terminal Gly-Gly + 2-[(2R,5Z)-2-carboxy-4-methylthiazol-5(2H)-ylidene]ethyl phosphate + 2 H2O + H(+). It functions in the pathway cofactor biosynthesis; thiamine diphosphate biosynthesis. Functionally, catalyzes the rearrangement of 1-deoxy-D-xylulose 5-phosphate (DXP) to produce the thiazole phosphate moiety of thiamine. Sulfur is provided by the thiocarboxylate moiety of the carrier protein ThiS. In vitro, sulfur can be provided by H(2)S. The chain is Thiazole synthase from Cellvibrio japonicus (strain Ueda107) (Pseudomonas fluorescens subsp. cellulosa).